Here is a 415-residue protein sequence, read N- to C-terminus: Serine hydroxymethyltransferase (415 aa).

(6S)-5,6,7,8-tetrahydrofolate contacts are provided by residues leucine 115 and 119-121; that span reads GHL. An N6-(pyridoxal phosphate)lysine modification is found at lysine 224. 348-350 lines the (6S)-5,6,7,8-tetrahydrofolate pocket; the sequence is SPF.

The protein belongs to the SHMT family. In terms of assembly, homodimer. It depends on pyridoxal 5'-phosphate as a cofactor.

The protein resides in the cytoplasm. It carries out the reaction (6R)-5,10-methylene-5,6,7,8-tetrahydrofolate + glycine + H2O = (6S)-5,6,7,8-tetrahydrofolate + L-serine. The protein operates within one-carbon metabolism; tetrahydrofolate interconversion. It participates in amino-acid biosynthesis; glycine biosynthesis; glycine from L-serine: step 1/1. In terms of biological role, catalyzes the reversible interconversion of serine and glycine with tetrahydrofolate (THF) serving as the one-carbon carrier. This reaction serves as the major source of one-carbon groups required for the biosynthesis of purines, thymidylate, methionine, and other important biomolecules. Also exhibits THF-independent aldolase activity toward beta-hydroxyamino acids, producing glycine and aldehydes, via a retro-aldol mechanism. This chain is Serine hydroxymethyltransferase, found in Latilactobacillus sakei subsp. sakei (strain 23K) (Lactobacillus sakei subsp. sakei).